Reading from the N-terminus, the 223-residue chain is 2-C-methyl-D-erythritol 4-phosphate cytidylyltransferase (223 aa).

It belongs to the IspD/TarI cytidylyltransferase family. IspD subfamily.

The catalysed reaction is 2-C-methyl-D-erythritol 4-phosphate + CTP + H(+) = 4-CDP-2-C-methyl-D-erythritol + diphosphate. It functions in the pathway isoprenoid biosynthesis; isopentenyl diphosphate biosynthesis via DXP pathway; isopentenyl diphosphate from 1-deoxy-D-xylulose 5-phosphate: step 2/6. Its function is as follows. Catalyzes the formation of 4-diphosphocytidyl-2-C-methyl-D-erythritol from CTP and 2-C-methyl-D-erythritol 4-phosphate (MEP). In Prochlorococcus marinus (strain MIT 9301), this protein is 2-C-methyl-D-erythritol 4-phosphate cytidylyltransferase.